Reading from the N-terminus, the 982-residue chain is Glycine dehydrogenase (decarboxylating) (982 aa).

Lys-721 carries the post-translational modification N6-(pyridoxal phosphate)lysine.

The protein belongs to the GcvP family. The glycine cleavage system is composed of four proteins: P, T, L and H. It depends on pyridoxal 5'-phosphate as a cofactor.

It catalyses the reaction N(6)-[(R)-lipoyl]-L-lysyl-[glycine-cleavage complex H protein] + glycine + H(+) = N(6)-[(R)-S(8)-aminomethyldihydrolipoyl]-L-lysyl-[glycine-cleavage complex H protein] + CO2. The glycine cleavage system catalyzes the degradation of glycine. The P protein binds the alpha-amino group of glycine through its pyridoxal phosphate cofactor; CO(2) is released and the remaining methylamine moiety is then transferred to the lipoamide cofactor of the H protein. The sequence is that of Glycine dehydrogenase (decarboxylating) from Prochlorococcus marinus (strain MIT 9303).